Here is a 483-residue protein sequence, read N- to C-terminus: Glutamate--tRNA ligase (483 aa).

The 'HIGH' region signature appears at 11–21 (PSPTGHLHIGN). Positions 108, 110, 135, and 137 each coordinate Zn(2+). Residues 252 to 256 (KLSKR) carry the 'KMSKS' region motif. Lys-255 is an ATP binding site.

The protein belongs to the class-I aminoacyl-tRNA synthetase family. Glutamate--tRNA ligase type 1 subfamily. In terms of assembly, monomer. The cofactor is Zn(2+).

Its subcellular location is the cytoplasm. The catalysed reaction is tRNA(Glu) + L-glutamate + ATP = L-glutamyl-tRNA(Glu) + AMP + diphosphate. Its function is as follows. Catalyzes the attachment of glutamate to tRNA(Glu) in a two-step reaction: glutamate is first activated by ATP to form Glu-AMP and then transferred to the acceptor end of tRNA(Glu). The polypeptide is Glutamate--tRNA ligase (Bacillus subtilis (strain 168)).